Consider the following 354-residue polypeptide: Guanine nucleotide-binding protein G(o) subunit alpha (354 aa).

Residue glycine 2 is the site of N-myristoyl glycine attachment. A lipid anchor (S-palmitoyl cysteine) is attached at cysteine 3. The 323-residue stretch at lysine 32–tyrosine 354 folds into the G-alpha domain. The G1 motif stretch occupies residues lysine 35–threonine 48. GTP contacts are provided by glutamate 43, lysine 46, serine 47, threonine 48, serine 152, leucine 176, arginine 177, threonine 178, and arginine 179. Serine 47 contributes to the Mg(2+) binding site. Positions aspartate 174–threonine 182 are G2 motif. Position 182 (threonine 182) interacts with Mg(2+). Residues phenylalanine 197 to arginine 206 are G3 motif. Glutamine 205 bears the 5-glutamyl histamine mark. The segment at isoleucine 266–aspartate 273 is G4 motif. Residues asparagine 270, aspartate 273, and cysteine 325 each contribute to the GTP site. Residues threonine 324–threonine 329 form a G5 motif region. Cysteine 351 carries the S-palmitoyl cysteine lipid modification.

It belongs to the G-alpha family. G(i/o/t/z) subfamily. As to quaternary structure, g proteins are composed of 3 units; alpha, beta and gamma. The alpha chain contains the guanine nucleotide binding site. Forms a complex with GNB1 and GNG3. Interacts with RGS14. Interacts with RGS16. Interacts with RGS19. Interacts (when palmitoylated) with ADGRG3. Post-translationally, histaminylated at Gln-205 residues by TGM2.

It is found in the cell membrane. Its subcellular location is the membrane. The catalysed reaction is GTP + H2O = GDP + phosphate + H(+). The GTPase activity is promoted by GTPAse activators, such as RGS14, RGS16 and RGS19. Its function is as follows. Guanine nucleotide-binding proteins (G proteins) function as transducers downstream of G protein-coupled receptors (GPCRs) in numerous signaling cascades. The alpha chain contains the guanine nucleotide binding site and alternates between an active, GTP-bound state and an inactive, GDP-bound state. Signaling by an activated GPCR promotes GDP release and GTP binding. The alpha subunit has a low GTPase activity that converts bound GTP to GDP, thereby terminating the signal. Both GDP release and GTP hydrolysis are modulated by numerous regulatory proteins. Signaling is mediated via effector proteins, such as adenylate cyclase. Inhibits adenylate cyclase activity, leading to decreased intracellular cAMP levels. In Bos taurus (Bovine), this protein is Guanine nucleotide-binding protein G(o) subunit alpha (GNAO1).